The following is a 1543-amino-acid chain: ABC multidrug transporter AFR1 (1543 aa).

The interval methionine 1–aspartate 85 is disordered. Over residues threonine 18–threonine 41 the composition is skewed to polar residues. Residues alanine 62–proline 83 show a composition bias toward basic and acidic residues. N-linked (GlcNAc...) asparagine glycosylation is present at asparagine 117. The tract at residues serine 119 to alanine 157 is disordered. The span at serine 140–alanine 157 shows a compositional bias: basic and acidic residues. Residues asparagine 208 and asparagine 398 are each glycosylated (N-linked (GlcNAc...) asparagine). The region spanning isoleucine 222–proline 474 is the ABC transporter 1 domain. The next 5 helical transmembrane spans lie at phenylalanine 585–tyrosine 605, glycine 619–serine 639, valine 670–leucine 690, glycine 695–phenylalanine 715, and valine 727–isoleucine 747. The N-linked (GlcNAc...) asparagine glycan is linked to asparagine 823. The helical transmembrane segment at phenylalanine 845–valine 865 threads the bilayer. Positions phenylalanine 918–glycine 1160 constitute an ABC transporter 2 domain. Glycine 954–threonine 961 is a binding site for ATP. A glycan (N-linked (GlcNAc...) asparagine) is linked at asparagine 1223. Helical transmembrane passes span tryptophan 1254–leucine 1274, valine 1285–glutamine 1305, methionine 1336–phenylalanine 1356, phenylalanine 1366–alanine 1386, isoleucine 1391–valine 1411, and phenylalanine 1517–phenylalanine 1537.

The protein belongs to the ABC transporter superfamily. ABCG family. PDR (TC 3.A.1.205) subfamily.

The protein localises to the cell membrane. The enzyme catalyses itraconazole(in) + ATP + H2O = itraconazole(out) + ADP + phosphate + H(+). It carries out the reaction voriconazole(in) + ATP + H2O = voriconazole(out) + ADP + phosphate + H(+). It catalyses the reaction fluconazole(in) + ATP + H2O = fluconazole(out) + ADP + phosphate + H(+). In terms of biological role, major pleiotropic ABC efflux transporter that confers resistance to structurally and functionally unrelated compounds including azoles such as fluconazole (FLC), itraconazole (ITC), posaconazole (POS), and voriconazole (VRC). Is also able to efflux the eukaryote protein synthesis inhibitor cycloheximide (CHX). The sequence is that of ABC multidrug transporter AFR1 from Cryptococcus neoformans var. grubii serotype A (strain H99 / ATCC 208821 / CBS 10515 / FGSC 9487) (Filobasidiella neoformans var. grubii).